We begin with the raw amino-acid sequence, 161 residues long: Globin CTT-VIIB-10 (161 aa).

The N-terminal stretch at Met-1 to Ala-16 is a signal peptide. In terms of domain architecture, Globin spans Pro-18–Leu-161. 2 residues coordinate heme b: His-76 and His-111.

It belongs to the globin family. As to quaternary structure, homodimer.

In Chironomus thummi thummi (Midge), this protein is Globin CTT-VIIB-10 (CTT-7B10).